The sequence spans 184 residues: ATP synthase subunit b (184 aa).

Residues 4–24 (LSVLFALVASPALAASGPFFS) form a helical membrane-spanning segment.

This sequence belongs to the ATPase B chain family. In terms of assembly, F-type ATPases have 2 components, F(1) - the catalytic core - and F(0) - the membrane proton channel. F(1) has five subunits: alpha(3), beta(3), gamma(1), delta(1), epsilon(1). F(0) has three main subunits: a(1), b(2) and c(10-14). The alpha and beta chains form an alternating ring which encloses part of the gamma chain. F(1) is attached to F(0) by a central stalk formed by the gamma and epsilon chains, while a peripheral stalk is formed by the delta and b chains.

The protein resides in the cell inner membrane. In terms of biological role, f(1)F(0) ATP synthase produces ATP from ADP in the presence of a proton or sodium gradient. F-type ATPases consist of two structural domains, F(1) containing the extramembraneous catalytic core and F(0) containing the membrane proton channel, linked together by a central stalk and a peripheral stalk. During catalysis, ATP synthesis in the catalytic domain of F(1) is coupled via a rotary mechanism of the central stalk subunits to proton translocation. Component of the F(0) channel, it forms part of the peripheral stalk, linking F(1) to F(0). The protein is ATP synthase subunit b of Paracoccus denitrificans (strain Pd 1222).